The primary structure comprises 213 residues: Glutathione S-transferase DHAR2 (213 aa).

Position 6 is an S-glutathionyl cysteine (Cys-6). Residues Lys-8 and Asp-19 each coordinate glutathione. Residues Lys-8 and Asp-19 each coordinate L-ascorbate. In terms of domain architecture, GST N-terminal spans 10 to 83; that stretch reads AVGAPDVLGD…DVIVGLLEEK (74 aa). Position 20 is an S-glutathionyl cysteine (Cys-20). Cys-20 acts as the Nucleophile in catalysis. The Glutathione-binding motif lies at 20 to 25; that stretch reads CPFSQR. Residues Lys-47, Val-60, Ser-73, His-160, and Trp-207 each coordinate glutathione. One can recognise a GST C-terminal domain in the interval 84-213; that stretch reads YPEPSLKTPP…VAGWESKVNA (130 aa). L-ascorbate is bound at residue Lys-210.

Belongs to the GST superfamily. DHAR family. As to quaternary structure, monomer. Spontaneous S-glutathionylation in the presence of oxidized glutathione (GSSG).

The protein localises to the cytoplasm. It is found in the cytosol. The enzyme catalyses RX + glutathione = an S-substituted glutathione + a halide anion + H(+). It catalyses the reaction L-dehydroascorbate + 2 glutathione = glutathione disulfide + L-ascorbate. Its function is as follows. Displays a dual function. As a soluble protein, exhibits glutathione-dependent thiol transferase and dehydroascorbate (DHA) reductase activities. Exhibits glutathione-dependent thiol transferase and dehydroascorbate (DHA) reductase activities. Key component of the ascorbate recycling system. Involved in the redox homeostasis, especially in scavenging of ROS under oxidative stresses. Plays a role in ozone tolerance. In Arabidopsis thaliana (Mouse-ear cress), this protein is Glutathione S-transferase DHAR2 (DHAR2).